Consider the following 72-residue polypeptide: Translation initiation factor IF-1 (72 aa).

The S1-like domain occupies 1–72; that stretch reads MAKDDVIQMQ…SRARIVFRAK (72 aa).

This sequence belongs to the IF-1 family. Component of the 30S ribosomal translation pre-initiation complex which assembles on the 30S ribosome in the order IF-2 and IF-3, IF-1 and N-formylmethionyl-tRNA(fMet); mRNA recruitment can occur at any time during PIC assembly.

The protein localises to the cytoplasm. Its function is as follows. One of the essential components for the initiation of protein synthesis. Stabilizes the binding of IF-2 and IF-3 on the 30S subunit to which N-formylmethionyl-tRNA(fMet) subsequently binds. Helps modulate mRNA selection, yielding the 30S pre-initiation complex (PIC). Upon addition of the 50S ribosomal subunit IF-1, IF-2 and IF-3 are released leaving the mature 70S translation initiation complex. The chain is Translation initiation factor IF-1 from Burkholderia mallei (strain NCTC 10247).